Here is a 252-residue protein sequence, read N- to C-terminus: 4-formylbenzenesulfonate dehydrogenase TsaC1/TsaC2 (252 aa).

Residues 9–36 (IVTGGASGFGAAIARRLSQAGAAVLVAD) and Asp62 contribute to the NAD(+) site. A substrate-binding site is contributed by Ser142. Catalysis depends on Tyr155, which acts as the Proton acceptor. Lys159 contributes to the NAD(+) binding site.

The protein belongs to the short-chain dehydrogenases/reductases (SDR) family. Homodimer.

The catalysed reaction is 4-formylbenzenesulfonate + NAD(+) + H2O = 4-sulfobenzoate + NADH + 2 H(+). Functionally, involved in the toluene-4-sulfonate degradation pathway. Does not discriminate between the sulfonate and the carboxyl substituents and can also be involved in the p-toluenecarboxylate degradation pathway. The protein is 4-formylbenzenesulfonate dehydrogenase TsaC1/TsaC2 (tsaC1) of Comamonas testosteroni (Pseudomonas testosteroni).